The chain runs to 130 residues: Small ribosomal subunit protein eS8 (130 aa).

It belongs to the eukaryotic ribosomal protein eS8 family. As to quaternary structure, part of the 30S ribosomal subunit.

The polypeptide is Small ribosomal subunit protein eS8 (Ignicoccus hospitalis (strain KIN4/I / DSM 18386 / JCM 14125)).